We begin with the raw amino-acid sequence, 247 residues long: MKVVNLTDIHLTRNRDKKLFDVNTYDNFDFVCEEIHRIQNLTEIELIIVSGDIANDGDVEAYRYFLNKMESLKTPYISILGNHDLNKNFEITLAEEKPKYIISSREYNNDNWYITAVDTVVEGEDYGFITQDNLAELERKIITNSNFNIAIFMHHHAMPVGTPIVDSCMLNNAKAILELCEKHRVKFIGSGHAHTPRVWHHNNMTACVSPAVSFQWLSGTNTVKISKGFGFNVIDFSPDLSITSCIY.

The Fe cation site is built by Asp8, His10, Asp52, Asn82, His154, His192, and His194. Residues His10, Asp52, and 82–83 (NH) contribute to the AMP site. His194 provides a ligand contact to AMP.

Belongs to the cyclic nucleotide phosphodiesterase class-III family. The cofactor is Fe(2+).

In Xenorhabdus bovienii (strain SS-2004) (Xenorhabdus nematophila subsp. bovienii), this protein is Probable cyclic nucleotide phosphodiesterase XBJ1_0953.